The sequence spans 291 residues: N-acetylmannosamine kinase (291 aa).

Residues 5–12 (AIDIGGTK) and 132–139 (GVGGGVVC) each bind ATP. The Zn(2+) site is built by histidine 156, cysteine 166, cysteine 168, and cysteine 173.

The protein belongs to the ROK (NagC/XylR) family. NanK subfamily. As to quaternary structure, homodimer.

It carries out the reaction an N-acyl-D-mannosamine + ATP = an N-acyl-D-mannosamine 6-phosphate + ADP + H(+). It participates in amino-sugar metabolism; N-acetylneuraminate degradation; D-fructose 6-phosphate from N-acetylneuraminate: step 2/5. Its function is as follows. Catalyzes the phosphorylation of N-acetylmannosamine (ManNAc) to ManNAc-6-P. This chain is N-acetylmannosamine kinase, found in Salmonella dublin (strain CT_02021853).